Consider the following 161-residue polypeptide: Sterile alpha motif domain-containing protein 12 (161 aa).

Positions 44–64 (QKVPDQKGTPKRLQGEAETAK) are disordered. One can recognise an SAM domain in the interval 77–143 (WTQQDVCKWL…LQQVLQLKVR (67 aa)).

The polypeptide is Sterile alpha motif domain-containing protein 12 (Samd12) (Mus musculus (Mouse)).